A 217-amino-acid polypeptide reads, in one-letter code: UPF0111 protein MTH_1689 (217 aa).

Belongs to the UPF0111 family.

This chain is UPF0111 protein MTH_1689, found in Methanothermobacter thermautotrophicus (strain ATCC 29096 / DSM 1053 / JCM 10044 / NBRC 100330 / Delta H) (Methanobacterium thermoautotrophicum).